Consider the following 1478-residue polypeptide: Serine/threonine-protein kinase BCK1/SLK1/SSP31 (1478 aa).

Disordered stretches follow at residues 1 to 70 (MPFL…TSSQ), 99 to 126 (TSFT…GGNS), 217 to 359 (NVTN…RRHH), and 373 to 427 (FGSG…KGNL). A compositionally biased stretch (low complexity) spans 29–49 (PTSSVASTKSSSKSPRATSRK). 2 stretches are compositionally biased toward polar residues: residues 58–70 (QFPN…TSSQ) and 99–110 (TSFTNSSYKNDN). A compositionally biased stretch (low complexity) spans 111 to 126 (GPSSLSDSRKSSGGNS). The span at 223–233 (IRQKSASKLKS) shows a compositional bias: basic residues. 2 stretches are compositionally biased toward polar residues: residues 253-273 (DISN…SGPS) and 281-297 (LHST…SSLY). Low complexity-rich tracts occupy residues 298-320 (RRSF…SPSN) and 342-353 (SASPPASPSYPS). 2 stretches are compositionally biased toward polar residues: residues 386–396 (NPQGHSLSSEN) and 407–420 (TNVS…SLPT). Thr-407 is subject to Phosphothreonine. A phosphoserine mark is found at Ser-411 and Ser-491. A disordered region spans residues 644–671 (KPKPAPLTSENNVPLKSVKSKSSMRSGT). The segment covering 659 to 671 (KSVKSKSSMRSGT) has biased composition (low complexity). Ser-747 is subject to Phosphoserine. Disordered regions lie at residues 752 to 877 (LNLP…ASTH), 895 to 939 (KTDQ…RGNS), 960 to 1021 (ADAP…TQDK), and 1053 to 1116 (TEGI…TPKR). The span at 765 to 777 (TPITENESKSSFQ) shows a compositional bias: polar residues. Residues 779–809 (LRKDEGTEIDFNHRRESPYTKPELAPKREAP) are compositionally biased toward basic and acidic residues. Residues 813–827 (ANTSPQRTLSTSKQN) show a composition bias toward polar residues. Ser-816 is modified (phosphoserine). Composition is skewed to low complexity over residues 851-870 (QLLS…LTSS) and 914-925 (NRSNSTVSTSNS). The segment covering 967–977 (DSDDSDDDSSS) has biased composition (acidic residues). The span at 994 to 1011 (NENKKDEKSDNSSTHSDE) shows a compositional bias: basic and acidic residues. A phosphoserine mark is found at Ser-1058 and Ser-1061. A compositionally biased stretch (low complexity) spans 1058 to 1083 (SPTSPKSLDSLLSPKNVASSRTEPST). Ser-1134 bears the Phosphoserine; by PKC mark. The region spanning 1175-1440 (WMKGEMIGKG…ANELLSHPFS (266 aa)) is the Protein kinase domain. ATP is bound by residues 1181 to 1189 (IGKGSFGAV) and Lys-1204. Residue Asp-1303 is the Proton acceptor of the active site.

This sequence belongs to the protein kinase superfamily. STE Ser/Thr protein kinase family. MAP kinase kinase kinase subfamily.

The protein localises to the cytoplasm. It catalyses the reaction L-seryl-[protein] + ATP = O-phospho-L-seryl-[protein] + ADP + H(+). The catalysed reaction is L-threonyl-[protein] + ATP = O-phospho-L-threonyl-[protein] + ADP + H(+). Functionally, serine/threonine protein kinase involved in a signal transduction pathway that plays a role in yeast cell morphogenesis and cell growth. This pathway seems to start by SMP3; then involve the kinase PKC1 that may act on this kinase. BCK1 probably phosphorylates MKK1 and MKK2 which themselves phosphorylate the MPK1 kinase. This chain is Serine/threonine-protein kinase BCK1/SLK1/SSP31 (BCK1), found in Saccharomyces cerevisiae (strain ATCC 204508 / S288c) (Baker's yeast).